The sequence spans 352 residues: Gamma-aminobutyric acid-binding protein (352 aa).

The signal sequence occupies residues 1–28 (MFKSLHQYAHVFSRLSLFGLAFAAAAQA).

The protein belongs to the bacterial solute-binding protein 1 family.

Its subcellular location is the periplasm. In terms of biological role, binds specifically gamma-aminobutyric acid (GABA) with nanomolar affinity. Does not bind structurally related compounds such as 4-aminovaleric acid, spermidine, histamine and butyric acid. The polypeptide is Gamma-aminobutyric acid-binding protein (Pseudomonas aeruginosa (strain ATCC 15692 / DSM 22644 / CIP 104116 / JCM 14847 / LMG 12228 / 1C / PRS 101 / PAO1)).